We begin with the raw amino-acid sequence, 159 residues long: Prs ADP-ribosylating antitoxin (159 aa).

Positions 99-159 (EDMVEESGET…LAQIQSGAFA (61 aa)) are sufficient to neutralize toxin.

Belongs to the MbcA/ParS/Xre antitoxin family. As to quaternary structure, forms heterotetrameric ParS(2)-ParT(2) complexes. The 2 antitoxin fragments do not make contact in the crystal structure.

Antitoxin component of a type II toxin-antitoxin (TA) system. Neutralizes the bacteriostatic effect of cognate toxin ParT by inserting into its active site. The polypeptide is Prs ADP-ribosylating antitoxin (Sphingobium sp. (strain YBL2)).